Consider the following 352-residue polypeptide: MYTSFHRIDLPRTIVVGGGVLDKAGGYVSGVAQRGSYVLVVSGPTVSSKYFERLRASLEAEGLTVGLKIIRDATVETAEEVAREALESRIEVVAGLGGGKSIDVAKYASKRAGSVFVSIPTVASHDGITSPFSSLKGFDKPISRPAKAPEAIIIDVDVIAEAPRRYNIAGFGDLIGKYTAVLDWRLAHKLRLEYYGEYAASLALLSAKHVSQYAEEIALGTREGYRVLLEALVSSGVSMCIAGSTRPASGSEHLFAHALHIVARNKPLHGEAVGVGTIMMAYLHGKNWRRIRGLLKTVGAPTNAKELGVEDDEVVEALTIAARIRPERYTILGEKGLTREAAEALARKTGVI.

NAD(+)-binding positions include 99 to 103 and 121 to 124; these read GKSID and TVAS. Asp-126 is a substrate binding site. Ser-130 contributes to the NAD(+) binding site. Substrate is bound at residue Asp-173. Residues Asp-173 and His-253 each contribute to the Zn(2+) site. Residue His-257 participates in substrate binding. Residue His-269 coordinates Zn(2+).

The protein belongs to the glycerol-1-phosphate dehydrogenase family. Homodimer. Requires Zn(2+) as cofactor.

It localises to the cytoplasm. The catalysed reaction is sn-glycerol 1-phosphate + NAD(+) = dihydroxyacetone phosphate + NADH + H(+). It catalyses the reaction sn-glycerol 1-phosphate + NADP(+) = dihydroxyacetone phosphate + NADPH + H(+). The protein operates within membrane lipid metabolism; glycerophospholipid metabolism. Totally inhibited by EDTA in vitro. In terms of biological role, catalyzes the NAD(P)H-dependent reduction of dihydroxyacetonephosphate (DHAP or glycerone phosphate) to glycerol 1-phosphate (G1P). The G1P thus generated is used as the glycerophosphate backbone of phospholipids in the cellular membranes of Archaea. Is also able to catalyze the reverse reaction, i.e. the NAD(+)-dependent oxidation of G1P but not of G3P. Is not active toward glycerol, dihydroxyacetone, glyceraldehyde phosphate, and glycerol-2-phosphate. The polypeptide is Glycerol-1-phosphate dehydrogenase [NAD(P)+] (egsA) (Aeropyrum pernix (strain ATCC 700893 / DSM 11879 / JCM 9820 / NBRC 100138 / K1)).